The primary structure comprises 155 residues: NADH-ubiquinone oxidoreductase chain 6 (155 aa).

4 helical membrane-spanning segments follow: residues 24-44 (MSLLLALLTLSLCAVLWLGSF), 51-71 (YILFIVYIGGILVLFIYVCMI), 88-108 (AWGAVMLMSLTMETDTFIILG), and 118-138 (IPMTILIFLSIYLLIVFFAVV).

It belongs to the complex I subunit 6 family.

It localises to the mitochondrion membrane. The enzyme catalyses a ubiquinone + NADH + 5 H(+)(in) = a ubiquinol + NAD(+) + 4 H(+)(out). Core subunit of the mitochondrial membrane respiratory chain NADH dehydrogenase (Complex I) that is believed to belong to the minimal assembly required for catalysis. Complex I functions in the transfer of electrons from NADH to the respiratory chain. The immediate electron acceptor for the enzyme is believed to be ubiquinone. The polypeptide is NADH-ubiquinone oxidoreductase chain 6 (ND6) (Albinaria caerulea (Land snail)).